A 214-amino-acid chain; its full sequence is uncharacterized protein (214 aa).

The active-site Proton acceptor is the Y129.

This sequence belongs to the NAD(P)-dependent epimerase/dehydratase family.

This is an uncharacterized protein from Bacillus subtilis (strain 168).